A 61-amino-acid polypeptide reads, in one-letter code: Small ribosomal subunit protein uS14 (61 aa).

The Zn(2+) site is built by Cys-24, Cys-27, Cys-40, and Cys-43.

It belongs to the universal ribosomal protein uS14 family. Zinc-binding uS14 subfamily. Part of the 30S ribosomal subunit. Contacts proteins S3 and S10. Zn(2+) is required as a cofactor.

In terms of biological role, binds 16S rRNA, required for the assembly of 30S particles and may also be responsible for determining the conformation of the 16S rRNA at the A site. This Clostridium novyi (strain NT) protein is Small ribosomal subunit protein uS14.